The chain runs to 408 residues: MKRVHIMVLDSFGIGAAGDAEKFGDQGADTLGHIAQAFAEGKADKDGRKGPLHLPNLCRLGLGKAAEESTGKFPVGLDKDAEIIGAYGYASEISSGKDTPSGHWEIAGVPVLFDWGYFKDLKNSFPQELLDNIVKRANLPGYLGNCHASGTVILDELGEEHMKTGKPIFYTSADSVFQIACHEETFGLDKLYELCEIARDELNKGDYNIGRVIARPFIGDKPGNFSRTGNRHDLAVEPPAPTMLKKLVDEKQGHVVSIGKIADIYANVGITKKVKATGIDALFDATIEEMKLAGDNTIVFTNFVDFDSSYGHRRDVVGYGEALELFDRRLPELMELVKEDDILILTADHGCDPTWQGSDHTREHIPVLVYGPKVKPGSLGHRETFADIGQTVVKYFGLSPVEYGKAMF.

D10, D307, H312, D348, H349, and H360 together coordinate Mn(2+).

It belongs to the phosphopentomutase family. Mn(2+) is required as a cofactor.

It is found in the cytoplasm. The enzyme catalyses 2-deoxy-alpha-D-ribose 1-phosphate = 2-deoxy-D-ribose 5-phosphate. It catalyses the reaction alpha-D-ribose 1-phosphate = D-ribose 5-phosphate. Its pathway is carbohydrate degradation; 2-deoxy-D-ribose 1-phosphate degradation; D-glyceraldehyde 3-phosphate and acetaldehyde from 2-deoxy-alpha-D-ribose 1-phosphate: step 1/2. In terms of biological role, isomerase that catalyzes the conversion of deoxy-ribose 1-phosphate (dRib-1-P) and ribose 1-phosphate (Rib-1-P) to deoxy-ribose 5-phosphate (dRib-5-P) and ribose 5-phosphate (Rib-5-P), respectively. The sequence is that of Phosphopentomutase from Proteus mirabilis (strain HI4320).